The primary structure comprises 239 residues: UDP-2,3-diacylglucosamine hydrolase (239 aa).

Aspartate 8, histidine 10, aspartate 41, asparagine 78, and histidine 113 together coordinate Mn(2+). Position 78–79 (78–79 (NR)) interacts with substrate. Substrate is bound by residues aspartate 121, serine 159, asparagine 163, lysine 166, and histidine 194. Mn(2+)-binding residues include histidine 194 and histidine 196.

The protein belongs to the LpxH family. Mn(2+) serves as cofactor.

Its subcellular location is the cell inner membrane. It carries out the reaction UDP-2-N,3-O-bis[(3R)-3-hydroxytetradecanoyl]-alpha-D-glucosamine + H2O = 2-N,3-O-bis[(3R)-3-hydroxytetradecanoyl]-alpha-D-glucosaminyl 1-phosphate + UMP + 2 H(+). The protein operates within glycolipid biosynthesis; lipid IV(A) biosynthesis; lipid IV(A) from (3R)-3-hydroxytetradecanoyl-[acyl-carrier-protein] and UDP-N-acetyl-alpha-D-glucosamine: step 4/6. In terms of biological role, hydrolyzes the pyrophosphate bond of UDP-2,3-diacylglucosamine to yield 2,3-diacylglucosamine 1-phosphate (lipid X) and UMP by catalyzing the attack of water at the alpha-P atom. Involved in the biosynthesis of lipid A, a phosphorylated glycolipid that anchors the lipopolysaccharide to the outer membrane of the cell. This chain is UDP-2,3-diacylglucosamine hydrolase, found in Shewanella sp. (strain ANA-3).